Here is a 72-residue protein sequence, read N- to C-terminus: Translation initiation factor IF-1 (72 aa).

Residues 1-72 (MAKEDVIEVE…TRGRITYRYK (72 aa)) enclose the S1-like domain. Y60 is subject to Phosphotyrosine.

This sequence belongs to the IF-1 family. As to quaternary structure, component of the 30S ribosomal translation pre-initiation complex which assembles on the 30S ribosome in the order IF-2 and IF-3, IF-1 and N-formylmethionyl-tRNA(fMet); mRNA recruitment can occur at any time during PIC assembly.

It is found in the cytoplasm. In terms of biological role, one of the essential components for the initiation of protein synthesis. Stabilizes the binding of IF-2 and IF-3 on the 30S subunit to which N-formylmethionyl-tRNA(fMet) subsequently binds. Helps modulate mRNA selection, yielding the 30S pre-initiation complex (PIC). Upon addition of the 50S ribosomal subunit IF-1, IF-2 and IF-3 are released leaving the mature 70S translation initiation complex. The sequence is that of Translation initiation factor IF-1 from Shouchella clausii (strain KSM-K16) (Alkalihalobacillus clausii).